The sequence spans 291 residues: Ribonuclease Z (291 aa).

Zn(2+)-binding residues include His61, His63, Asp65, His66, His133, Asp201, and His257. Asp65 functions as the Proton acceptor in the catalytic mechanism.

Belongs to the RNase Z family. Homodimer. Requires Zn(2+) as cofactor.

It catalyses the reaction Endonucleolytic cleavage of RNA, removing extra 3' nucleotides from tRNA precursor, generating 3' termini of tRNAs. A 3'-hydroxy group is left at the tRNA terminus and a 5'-phosphoryl group is left at the trailer molecule.. Zinc phosphodiesterase, which displays some tRNA 3'-processing endonuclease activity. Probably involved in tRNA maturation, by removing a 3'-trailer from precursor tRNA. The sequence is that of Ribonuclease Z from Saccharolobus islandicus (strain Y.N.15.51 / Yellowstone #2) (Sulfolobus islandicus).